We begin with the raw amino-acid sequence, 273 residues long: Flagellin FljN (273 aa).

Belongs to the bacterial flagellin family. In terms of assembly, in C.crescentus, the flagellar filament is composed of multiple flagellins of 29 kDa; 27 kDa and 25 kDa.

It is found in the secreted. The protein resides in the bacterial flagellum. Flagellin is the subunit protein which polymerizes to form the filaments of bacterial flagella. In Caulobacter vibrioides (strain ATCC 19089 / CIP 103742 / CB 15) (Caulobacter crescentus), this protein is Flagellin FljN (fljN).